We begin with the raw amino-acid sequence, 350 residues long: Protein RecA (350 aa).

66–73 is an ATP binding site; it reads GPESSGKT.

The protein belongs to the RecA family.

Its subcellular location is the cytoplasm. Its function is as follows. Can catalyze the hydrolysis of ATP in the presence of single-stranded DNA, the ATP-dependent uptake of single-stranded DNA by duplex DNA, and the ATP-dependent hybridization of homologous single-stranded DNAs. It interacts with LexA causing its activation and leading to its autocatalytic cleavage. The protein is Protein RecA of Nocardioides sp. (strain ATCC BAA-499 / JS614).